The primary structure comprises 138 residues: Translation initiation factor 2 subunit beta (138 aa).

This sequence belongs to the eIF-2-beta/eIF-5 family. As to quaternary structure, heterotrimer composed of an alpha, a beta and a gamma chain.

Its function is as follows. eIF-2 functions in the early steps of protein synthesis by forming a ternary complex with GTP and initiator tRNA. In Methanopyrus kandleri (strain AV19 / DSM 6324 / JCM 9639 / NBRC 100938), this protein is Translation initiation factor 2 subunit beta.